Consider the following 334-residue polypeptide: H-2 class I histocompatibility antigen, Q7 alpha chain (334 aa).

An N-terminal signal peptide occupies residues 1–21; it reads MALTMLLLLVAAALTLIETRA. An alpha-1 region spans residues 22-111; the sequence is GQHSLQYFHT…AQSYYNQSKG (90 aa). Residues 22–310 are Extracellular-facing; that stretch reads GQHSLQYFHT…PPYTVSNMAT (289 aa). Asn-107 carries N-linked (GlcNAc...) asparagine glycosylation. Residues 112-203 form an alpha-2 region; sequence GSHTLQWMYG…QLGKETLLRT (92 aa). Intrachain disulfides connect Cys-122/Cys-185 and Cys-224/Cys-280. The interval 204-295 is alpha-3; the sequence is DPPKAHVTHH…GLPEPLTLRW (92 aa). An Ig-like C1-type domain is found at 206–294; that stretch reads PKAHVTHHPR…EGLPEPLTLR (89 aa). Asn-277 carries an N-linked (GlcNAc...) asparagine glycan. Residues 296–310 are connecting peptide; that stretch reads GRWEPPPYTVSNMAT. A helical transmembrane segment spans residues 311–332; sequence IAVVVDLGAVAIIGAVVAFVMN.

This sequence belongs to the MHC class I family. Heterodimer of an alpha chain and a beta chain (beta-2-microglobulin).

The protein localises to the membrane. In terms of biological role, involved in the presentation of foreign antigens to the immune system. The chain is H-2 class I histocompatibility antigen, Q7 alpha chain (H2-Q7) from Mus musculus (Mouse).